Here is a 230-residue protein sequence, read N- to C-terminus: Ribonuclease HII (230 aa).

The 190-residue stretch at 28–217 (FRIAGIDEAG…VKEHLPSQPD (190 aa)) folds into the RNase H type-2 domain. A divalent metal cation is bound by residues aspartate 34, glutamate 35, and aspartate 126. A disordered region spans residues 211-230 (HLPSQPDCDTAGPSTGLFSF).

Belongs to the RNase HII family. Requires Mn(2+) as cofactor. The cofactor is Mg(2+).

The protein resides in the cytoplasm. It carries out the reaction Endonucleolytic cleavage to 5'-phosphomonoester.. In terms of biological role, endonuclease that specifically degrades the RNA of RNA-DNA hybrids. This Geobacter sp. (strain M21) protein is Ribonuclease HII.